Consider the following 105-residue polypeptide: U-scoloptoxin(10)-Sm3a (105 aa).

An N-terminal signal peptide occupies residues 1–23; sequence MYKFIFIFFTVFFLINIIEESXT.

This sequence belongs to the scoloptoxin-10 family. In terms of processing, contains 3 disulfide bonds. As to expression, expressed by the venom gland.

It localises to the secreted. This chain is U-scoloptoxin(10)-Sm3a, found in Scolopendra morsitans (Tanzanian blue ringleg centipede).